We begin with the raw amino-acid sequence, 190 residues long: Large ribosomal subunit protein uL5 (190 aa).

It belongs to the universal ribosomal protein uL5 family. Part of the 50S ribosomal subunit; part of the 5S rRNA/L5/L18/L25 subcomplex. Contacts the 5S rRNA and the P site tRNA. Forms a bridge to the 30S subunit in the 70S ribosome.

In terms of biological role, this is one of the proteins that bind and probably mediate the attachment of the 5S RNA into the large ribosomal subunit, where it forms part of the central protuberance. In the 70S ribosome it contacts protein S13 of the 30S subunit (bridge B1b), connecting the 2 subunits; this bridge is implicated in subunit movement. Contacts the P site tRNA; the 5S rRNA and some of its associated proteins might help stabilize positioning of ribosome-bound tRNAs. This is Large ribosomal subunit protein uL5 from Corynebacterium efficiens (strain DSM 44549 / YS-314 / AJ 12310 / JCM 11189 / NBRC 100395).